The sequence spans 336 residues: Phospho-N-acetylmuramoyl-pentapeptide-transferase (336 aa).

A run of 10 helical transmembrane segments spans residues 3-23 (LTLIAAIISFMVSAFTMPYFI), 53-73 (GGTVFLLVATAVSLLVSLFSI), 78-98 (SLALISGILSIVVIYGIIGFL), 118-138 (LALQLVGGLMFYFLHVSPSGI), 143-163 (VFGYQLPLGIFYLFFVLFWVV), 174-194 (GIDGLASISVVISLVTYGVIA), 200-220 (FDVLLLIGAMIGALLGFFCFN), 226-246 (VFMGDVGSLALGAMLAAISIA), 251-271 (WTLLIIGIVYVLETSSVMLQV), and 316-336 (AFLWGVGSLASLLVLAILYVF).

The protein belongs to the glycosyltransferase 4 family. MraY subfamily. Mg(2+) serves as cofactor.

The protein localises to the cell membrane. It carries out the reaction UDP-N-acetyl-alpha-D-muramoyl-L-alanyl-gamma-D-glutamyl-L-lysyl-D-alanyl-D-alanine + di-trans,octa-cis-undecaprenyl phosphate = Mur2Ac(oyl-L-Ala-gamma-D-Glu-L-Lys-D-Ala-D-Ala)-di-trans,octa-cis-undecaprenyl diphosphate + UMP. Its pathway is cell wall biogenesis; peptidoglycan biosynthesis. Functionally, catalyzes the initial step of the lipid cycle reactions in the biosynthesis of the cell wall peptidoglycan: transfers peptidoglycan precursor phospho-MurNAc-pentapeptide from UDP-MurNAc-pentapeptide onto the lipid carrier undecaprenyl phosphate, yielding undecaprenyl-pyrophosphoryl-MurNAc-pentapeptide, known as lipid I. The chain is Phospho-N-acetylmuramoyl-pentapeptide-transferase from Streptococcus pyogenes serotype M1.